The sequence spans 257 residues: Glycerol-3-phosphate acyltransferase (257 aa).

6 consecutive transmembrane segments (helical) span residues 7 to 27 (IVMAYILTLIISPLYSYLIGS), 66 to 86 (ILTLFLDIIKPITTVSLTYII), 104 to 124 (AILVYFGGIFTIIGHCYPIFF), 140 to 160 (ITVDPIVALIGIITLLVILLI), 164 to 184 (MSLSAMITATFTCFLVLVPGI), and 203 to 223 (YVIKGIWYVWFFLLVSASLLI).

It belongs to the PlsY family. Probably interacts with PlsX.

Its subcellular location is the cell membrane. It catalyses the reaction an acyl phosphate + sn-glycerol 3-phosphate = a 1-acyl-sn-glycero-3-phosphate + phosphate. The protein operates within lipid metabolism; phospholipid metabolism. Catalyzes the transfer of an acyl group from acyl-phosphate (acyl-PO(4)) to glycerol-3-phosphate (G3P) to form lysophosphatidic acid (LPA). This enzyme utilizes acyl-phosphate as fatty acyl donor, but not acyl-CoA or acyl-ACP. The sequence is that of Glycerol-3-phosphate acyltransferase from Ureaplasma parvum serovar 3 (strain ATCC 700970).